A 92-amino-acid chain; its full sequence is Small ribosomal subunit protein uS19 (92 aa).

The protein belongs to the universal ribosomal protein uS19 family.

In terms of biological role, protein S19 forms a complex with S13 that binds strongly to the 16S ribosomal RNA. The polypeptide is Small ribosomal subunit protein uS19 (Pelobacter propionicus (strain DSM 2379 / NBRC 103807 / OttBd1)).